The following is a 353-amino-acid chain: MNGTEGPFFYVPMVNTTGIVRSPYDYPQYYLVSPAAYAALGAYMFLLILLGFPINFLTLYVTIEHKKLRTPLNYILLNLAVADLFMVFGGFTTTMYTSMHGYFVLGRLGCNMEGFFATLGGEIGLWSLVVLAVERWLVVCKPISNFRFGENHAIMGLAFTWVMACSCAVPPLVGWSRYIPEGMQCSCGVDYYTRAEGFNNESFVIYMFACHFIIPMCVVFFCYGRLLCAVKEAAAAQQESETTQRAEKEVTRMVVIMGIAFLICWCPYASVAWYIFTHQGSEFGPVFMTLPAFFAKTSSVYNPLIYILMNKQFRHCMITTLCCGKNPFEEEEGASTASKTEASSVSSSSVSPA.

Residues 1–36 (MNGTEGPFFYVPMVNTTGIVRSPYDYPQYYLVSPAA) are Extracellular-facing. 2 N-linked (GlcNAc...) asparagine glycosylation sites follow: N2 and N15. Residues 37–61 (YAALGAYMFLLILLGFPINFLTLYV) traverse the membrane as a helical segment. The Cytoplasmic portion of the chain corresponds to 62–73 (TIEHKKLRTPLN). Residues 74-96 (YILLNLAVADLFMVFGGFTTTMY) form a helical membrane-spanning segment. The Extracellular portion of the chain corresponds to 97–110 (TSMHGYFVLGRLGC). A disulfide bridge links C110 with C187. Residues 111–133 (NMEGFFATLGGEIGLWSLVVLAV) traverse the membrane as a helical segment. A 'Ionic lock' involved in activated form stabilization motif is present at residues 134–136 (ERW). Residues 134-152 (ERWLVVCKPISNFRFGENH) are Cytoplasmic-facing. The chain crosses the membrane as a helical span at residues 153-173 (AIMGLAFTWVMACSCAVPPLV). Over 174-202 (GWSRYIPEGMQCSCGVDYYTRAEGFNNES) the chain is Extracellular. A glycan (N-linked (GlcNAc...) asparagine) is linked at N200. A helical membrane pass occupies residues 203 to 224 (FVIYMFACHFIIPMCVVFFCYG). Residues 225–252 (RLLCAVKEAAAAQQESETTQRAEKEVTR) are Cytoplasmic-facing. Residues 253–274 (MVVIMGIAFLICWCPYASVAWY) form a helical membrane-spanning segment. Residues 275 to 286 (IFTHQGSEFGPV) lie on the Extracellular side of the membrane. Residues 287–308 (FMTLPAFFAKTSSVYNPLIYIL) form a helical membrane-spanning segment. K296 carries the post-translational modification N6-(retinylidene)lysine. Residues 309–353 (MNKQFRHCMITTLCCGKNPFEEEEGASTASKTEASSVSSSSVSPA) lie on the Cytoplasmic side of the membrane. Residues C322 and C323 are each lipidated (S-palmitoyl cysteine). A disordered region spans residues 331-353 (EEGASTASKTEASSVSSSSVSPA). Residues 334–353 (ASTASKTEASSVSSSSVSPA) are compositionally biased toward low complexity.

It belongs to the G-protein coupled receptor 1 family. Opsin subfamily. In terms of processing, phosphorylated on some or all of the serine and threonine residues present in the C-terminal region. Contains one covalently linked retinal chromophore.

It is found in the membrane. Its subcellular location is the cell projection. It localises to the cilium. The protein localises to the photoreceptor outer segment. Photoreceptor required for image-forming vision at low light intensity. While most salt water fish species use retinal as chromophore, most freshwater fish use 3-dehydroretinal, or a mixture of retinal and 3-dehydroretinal. Light-induced isomerization of 11-cis to all-trans retinal triggers a conformational change that activates signaling via G-proteins. Subsequent receptor phosphorylation mediates displacement of the bound G-protein alpha subunit by arrestin and terminates signaling. This Dicentrarchus labrax (European seabass) protein is Rhodopsin (rho).